Consider the following 313-residue polypeptide: Methionyl-tRNA formyltransferase (313 aa).

Residue 110–113 (SLLP) participates in (6S)-5,6,7,8-tetrahydrofolate binding.

This sequence belongs to the Fmt family.

The catalysed reaction is L-methionyl-tRNA(fMet) + (6R)-10-formyltetrahydrofolate = N-formyl-L-methionyl-tRNA(fMet) + (6S)-5,6,7,8-tetrahydrofolate + H(+). Its function is as follows. Attaches a formyl group to the free amino group of methionyl-tRNA(fMet). The formyl group appears to play a dual role in the initiator identity of N-formylmethionyl-tRNA by promoting its recognition by IF2 and preventing the misappropriation of this tRNA by the elongation apparatus. In Enterococcus faecalis (strain ATCC 700802 / V583), this protein is Methionyl-tRNA formyltransferase.